Consider the following 314-residue polypeptide: tRNA dimethylallyltransferase (314 aa).

Gly-15 to Ser-22 lines the ATP pocket. Thr-17 to Ser-22 contacts substrate. Residues Asp-40–Leu-43 form an interaction with substrate tRNA region.

It belongs to the IPP transferase family. As to quaternary structure, monomer. Requires Mg(2+) as cofactor.

The enzyme catalyses adenosine(37) in tRNA + dimethylallyl diphosphate = N(6)-dimethylallyladenosine(37) in tRNA + diphosphate. In terms of biological role, catalyzes the transfer of a dimethylallyl group onto the adenine at position 37 in tRNAs that read codons beginning with uridine, leading to the formation of N6-(dimethylallyl)adenosine (i(6)A). The polypeptide is tRNA dimethylallyltransferase (Pelotomaculum thermopropionicum (strain DSM 13744 / JCM 10971 / SI)).